The following is a 216-amino-acid chain: Somatotropin (216 aa).

The signal sequence occupies residues Met-1–Ala-26. His-45 contacts Zn(2+). An intrachain disulfide couples Cys-78 to Cys-189. A Phosphoserine modification is found at Ser-131. Glu-198 contacts Zn(2+). An intrachain disulfide couples Cys-206 to Cys-214.

It belongs to the somatotropin/prolactin family.

It localises to the secreted. Functionally, plays an important role in growth control. Its major role in stimulating body growth is to stimulate the liver and other tissues to secrete IGF1. It stimulates both the differentiation and proliferation of myoblasts. It also stimulates amino acid uptake and protein synthesis in muscle and other tissues. The sequence is that of Somatotropin (Gh1) from Rattus norvegicus (Rat).